Consider the following 399-residue polypeptide: MSFNREHDLKLKFKSSKKLKISATFESMDLKEGLLRGIYSYGFEAPSAIQSRAITQIISGKDVIAQAQSGTGKTATFTIGMLQAIDLKKHDLQALVLSPTRELAAQIGKVVTNLGDYMNVKAYAMTGGKTMKDDLKKIQKHGCQVISGTPGRVLDMIKRRLIETRHVQILVLDEADELLSDTLGFKHQIYDIFTKLPRTSQVVVVSATMSPEILEITKKFMNDPVKILVKRDEITLEGIKQYYVNVEKEEWKFDTLCDIYDSLTITQCVIFCNSKKKVDWLAHKLKQSNFAVISMHGDMKQDERDRVMNEFRTGQSRVLISTDVWARGIDVQQVSLVINYDLPEITENYVHRIGRSGRFGRKGVAINFLTKIDASRMKEIEKYYKIKVKPMPADLSELS.

The Q motif signature appears at 23–51; that stretch reads ATFESMDLKEGLLRGIYSYGFEAPSAIQS. The 174-residue stretch at 54–227 folds into the Helicase ATP-binding domain; it reads ITQIISGKDV…KKFMNDPVKI (174 aa). Residue 67–74 participates in ATP binding; it reads AQSGTGKT. The short motif at 173-176 is the DEAD box element; it reads DEAD. A Helicase C-terminal domain is found at 238 to 399; it reads GIKQYYVNVE…PMPADLSELS (162 aa).

Belongs to the DEAD box helicase family. DDX48/FAL1 subfamily.

It is found in the nucleus. It localises to the nucleolus. It catalyses the reaction ATP + H2O = ADP + phosphate + H(+). ATP-dependent RNA helicase involved in 40S ribosomal subunit biogenesis. Required for the processing and cleavage of 35S pre-rRNA at sites A0, A1, and A2, leading to mature 18S rRNA. The polypeptide is ATP-dependent RNA helicase FAL1 (FAL1) (Candida glabrata (strain ATCC 2001 / BCRC 20586 / JCM 3761 / NBRC 0622 / NRRL Y-65 / CBS 138) (Yeast)).